Consider the following 188-residue polypeptide: Acireductone dioxygenase (188 aa).

Fe(2+)-binding residues include His-97, His-99, Glu-103, and His-141. Ni(2+) contacts are provided by His-97, His-99, Glu-103, and His-141.

Belongs to the acireductone dioxygenase (ARD) family. In terms of assembly, monomer. It depends on Fe(2+) as a cofactor. The cofactor is Ni(2+).

The catalysed reaction is 1,2-dihydroxy-5-(methylsulfanyl)pent-1-en-3-one + O2 = 3-(methylsulfanyl)propanoate + CO + formate + 2 H(+). The enzyme catalyses 1,2-dihydroxy-5-(methylsulfanyl)pent-1-en-3-one + O2 = 4-methylsulfanyl-2-oxobutanoate + formate + 2 H(+). It participates in amino-acid biosynthesis; L-methionine biosynthesis via salvage pathway; L-methionine from S-methyl-5-thio-alpha-D-ribose 1-phosphate: step 5/6. Catalyzes 2 different reactions between oxygen and the acireductone 1,2-dihydroxy-3-keto-5-methylthiopentene (DHK-MTPene) depending upon the metal bound in the active site. Fe-containing acireductone dioxygenase (Fe-ARD) produces formate and 2-keto-4-methylthiobutyrate (KMTB), the alpha-ketoacid precursor of methionine in the methionine recycle pathway. Ni-containing acireductone dioxygenase (Ni-ARD) produces methylthiopropionate, carbon monoxide and formate, and does not lie on the methionine recycle pathway. The polypeptide is Acireductone dioxygenase (Xanthomonas axonopodis pv. citri (strain 306)).